The sequence spans 169 residues: Cell division protein B3 (169 aa).

Its function is as follows. Part of a cell division machinery. May fulfill a coordination function between the Cdv proteins during cell division. The polypeptide is Cell division protein B3 (Sulfolobus acidocaldarius (strain ATCC 33909 / DSM 639 / JCM 8929 / NBRC 15157 / NCIMB 11770)).